Consider the following 406-residue polypeptide: Putative phosphate permease PH0640 (406 aa).

A run of 11 helical transmembrane segments spans residues 2–22 (IPID…AWAI), 45–65 (AVLI…KTVT), 83–103 (VLIY…IIAT), 114–134 (SIIG…IVNW), 140–160 (VVLS…LVFR), 182–202 (FWIG…VLHG), 207–227 (IGIL…TSML), 265–285 (VANA…GLAG), 288–308 (VPVP…GVAT), 330–350 (FTID…GMPI), and 385–405 (FVTV…LLLI).

It belongs to the inorganic phosphate transporter (PiT) (TC 2.A.20) family.

Its subcellular location is the cell membrane. Its function is as follows. Potential transporter for phosphate. The sequence is that of Putative phosphate permease PH0640 from Pyrococcus horikoshii (strain ATCC 700860 / DSM 12428 / JCM 9974 / NBRC 100139 / OT-3).